We begin with the raw amino-acid sequence, 246 residues long: Small ribosomal subunit protein uS2 (246 aa).

Positions 225–246 (SKSSASVPNKDEYVAAEDGAAE) are disordered.

Belongs to the universal ribosomal protein uS2 family.

This is Small ribosomal subunit protein uS2 from Cellvibrio japonicus (strain Ueda107) (Pseudomonas fluorescens subsp. cellulosa).